The chain runs to 138 residues: Protein Turandot B (138 aa).

The first 21 residues, 1 to 21 (MNFKTSLICFALLLIGTLCSA), serve as a signal peptide directing secretion.

Belongs to the Turandot family.

The protein resides in the secreted. In terms of biological role, a humoral factor that may play a role in stress tolerance. This is Protein Turandot B from Drosophila melanogaster (Fruit fly).